Reading from the N-terminus, the 173-residue chain is Photosystem I assembly protein Ycf3 (173 aa).

TPR repeat units follow at residues 35 to 68 (AFVYYRDGMSAQADGEYAEALDNYYEALKLEEDP), 72 to 105 (SYILYNIGIIHASNGDQEKALEYYNQSVDLNPRM), and 120 to 153 (GEKAREEGREEEAEALYDKAAEYWKQAIRLAPNN).

Belongs to the Ycf3 family.

It is found in the cellular thylakoid membrane. In terms of biological role, essential for the assembly of the photosystem I (PSI) complex. May act as a chaperone-like factor to guide the assembly of the PSI subunits. This chain is Photosystem I assembly protein Ycf3, found in Rippkaea orientalis (strain PCC 8801 / RF-1) (Cyanothece sp. (strain PCC 8801)).